The sequence spans 225 residues: NAD(P)H-quinone oxidoreductase subunit K, chloroplastic (225 aa).

[4Fe-4S] cluster is bound by residues C43, C44, C108, and C139.

Belongs to the complex I 20 kDa subunit family. NDH is composed of at least 16 different subunits, 5 of which are encoded in the nucleus. It depends on [4Fe-4S] cluster as a cofactor.

It is found in the plastid. The protein resides in the chloroplast thylakoid membrane. It carries out the reaction a plastoquinone + NADH + (n+1) H(+)(in) = a plastoquinol + NAD(+) + n H(+)(out). The enzyme catalyses a plastoquinone + NADPH + (n+1) H(+)(in) = a plastoquinol + NADP(+) + n H(+)(out). In terms of biological role, NDH shuttles electrons from NAD(P)H:plastoquinone, via FMN and iron-sulfur (Fe-S) centers, to quinones in the photosynthetic chain and possibly in a chloroplast respiratory chain. The immediate electron acceptor for the enzyme in this species is believed to be plastoquinone. Couples the redox reaction to proton translocation, and thus conserves the redox energy in a proton gradient. This chain is NAD(P)H-quinone oxidoreductase subunit K, chloroplastic, found in Fagopyrum esculentum subsp. ancestrale (Wild buckwheat).